The chain runs to 587 residues: Chaperonin GroEL 1 (587 aa).

ATP is bound by residues 29–32 (TIGP), 86–90 (DGTTT), glycine 413, and aspartate 492.

It belongs to the chaperonin (HSP60) family. Forms a cylinder of 14 subunits composed of two heptameric rings stacked back-to-back. Interacts with the co-chaperonin GroES.

Its subcellular location is the cytoplasm. It catalyses the reaction ATP + H2O + a folded polypeptide = ADP + phosphate + an unfolded polypeptide.. Functionally, together with its co-chaperonin GroES, plays an essential role in assisting protein folding. The GroEL-GroES system forms a nano-cage that allows encapsulation of the non-native substrate proteins and provides a physical environment optimized to promote and accelerate protein folding. The chain is Chaperonin GroEL 1 from Prochlorococcus marinus (strain MIT 9515).